The following is a 417-amino-acid chain: Putative nickel insertion protein (417 aa).

Residues 69–99 (HEHHHDHGHHHHGHGHHHDHTHDHHHHHEHR) are disordered. Positions 74-99 (DHGHHHHGHGHHHDHTHDHHHHHEHR) are enriched in basic residues.

It belongs to the LarC family.

This Maridesulfovibrio salexigens (strain ATCC 14822 / DSM 2638 / NCIMB 8403 / VKM B-1763) (Desulfovibrio salexigens) protein is Putative nickel insertion protein.